Reading from the N-terminus, the 379-residue chain is Putative F-box protein At2g33190 (379 aa).

The region spanning 6-53 (NGWSKLYPDLLRSIFESLSCLDFHRAGTVCSNWYAVSRSCPLYPWRIV) is the F-box domain.

This Arabidopsis thaliana (Mouse-ear cress) protein is Putative F-box protein At2g33190.